Consider the following 293-residue polypeptide: Ribosomal protein L11 methyltransferase (293 aa).

Residues T145, G166, D188, and N230 each contribute to the S-adenosyl-L-methionine site.

The protein belongs to the methyltransferase superfamily. PrmA family.

The protein resides in the cytoplasm. The catalysed reaction is L-lysyl-[protein] + 3 S-adenosyl-L-methionine = N(6),N(6),N(6)-trimethyl-L-lysyl-[protein] + 3 S-adenosyl-L-homocysteine + 3 H(+). Functionally, methylates ribosomal protein L11. The polypeptide is Ribosomal protein L11 methyltransferase (Yersinia pseudotuberculosis serotype O:3 (strain YPIII)).